Reading from the N-terminus, the 952-residue chain is Serine/threonine-protein kinase atg1 (952 aa).

The Protein kinase domain maps to 23–329; sequence FTINEQIGKG…FPEYFAHPVV (307 aa). ATP is bound by residues 29-37 and lysine 52; that span reads IGKGSFATV. The Proton acceptor role is filled by aspartate 166. Disordered regions lie at residues 331 to 478, 510 to 573, 783 to 806, and 920 to 952; these read EPIP…EAEQ, GRAN…SSPS, RLPE…GGSS, and AIAK…TPPK. Composition is skewed to basic and acidic residues over residues 338 to 347 and 356 to 372; these read GDDRPKEKSP and SLRD…HIDT. Residues 386–398 are compositionally biased toward polar residues; sequence SPRTPNIESNQPF. Basic and acidic residues predominate over residues 429–439; that stretch reads PRQRDRKDRTE. 3 stretches are compositionally biased toward polar residues: residues 459-475, 553-573, and 793-806; these read ANLQ…SITE, PDTS…SSPS, and NNRS…GGSS. The segment covering 933–952 has biased composition (low complexity); sequence SPRRSYSGGTTPTINNTPPK.

It belongs to the protein kinase superfamily. Ser/Thr protein kinase family. APG1/unc-51/ULK1 subfamily. In terms of assembly, homodimer. Forms a ternary complex with ATG13 and ATG17.

The protein localises to the cytoplasm. It localises to the preautophagosomal structure membrane. The enzyme catalyses L-seryl-[protein] + ATP = O-phospho-L-seryl-[protein] + ADP + H(+). The catalysed reaction is L-threonyl-[protein] + ATP = O-phospho-L-threonyl-[protein] + ADP + H(+). Its function is as follows. Serine/threonine protein kinase involved in the cytoplasm to vacuole transport (Cvt) and found to be essential in autophagy, where it is required for the formation of autophagosomes. Involved in the clearance of protein aggregates which cannot be efficiently cleared by the proteasome. Required for selective autophagic degradation of the nucleus (nucleophagy) as well as for mitophagy which contributes to regulate mitochondrial quantity and quality by eliminating the mitochondria to a basal level to fulfill cellular energy requirements and preventing excess ROS production. Also involved in endoplasmic reticulum-specific autophagic process, in selective removal of ER-associated degradation (ERAD) substrates. Plays a key role in ATG9 and ATG23 cycling through the pre-autophagosomal structure and is necessary to promote ATG18 binding to ATG9 through phosphorylation of ATG9. Catalyzes phosphorylation of ATG4, decreasing the interaction between ATG4 and ATG8 and impairing deconjugation of PE-conjugated forms of ATG8. This Botryotinia fuckeliana (strain B05.10) (Noble rot fungus) protein is Serine/threonine-protein kinase atg1.